The sequence spans 286 residues: Glycine--tRNA ligase alpha subunit (286 aa).

This sequence belongs to the class-II aminoacyl-tRNA synthetase family. Tetramer of two alpha and two beta subunits.

The protein localises to the cytoplasm. It carries out the reaction tRNA(Gly) + glycine + ATP = glycyl-tRNA(Gly) + AMP + diphosphate. The protein is Glycine--tRNA ligase alpha subunit (glyQ) of Thermotoga maritima (strain ATCC 43589 / DSM 3109 / JCM 10099 / NBRC 100826 / MSB8).